A 334-amino-acid chain; its full sequence is Malate dehydrogenase, cytoplasmic (334 aa).

The residue at position 2 (serine 2) is an N-acetylserine. NAD(+) is bound by residues 11-17 (GAAGQIA) and aspartate 42. Substrate is bound by residues arginine 92 and arginine 98. Asparagine 105 is an NAD(+) binding site. Lysine 110 is subject to N6-succinyllysine. Residue glutamine 112 coordinates NAD(+). N6-acetyllysine is present on residues lysine 118 and lysine 121. 129–131 (VGN) lines the NAD(+) pocket. Positions 131 and 162 each coordinate substrate. Histidine 187 functions as the Proton acceptor in the catalytic mechanism. Lysine 214 is subject to N6-succinyllysine. A Phosphoserine modification is found at serine 217. Omega-N-methylarginine is present on arginine 230. Residue serine 241 is modified to Phosphoserine. Lysine 298 carries the N6-acetyllysine; alternate modification. N6-succinyllysine; alternate is present on lysine 298. Residue serine 309 is modified to Phosphoserine. N6-succinyllysine is present on lysine 318. Phosphoserine is present on residues serine 332 and serine 333.

The protein belongs to the LDH/MDH superfamily. MDH type 2 family. Homodimer. In terms of processing, ISGylated. Acetylation at Lys-118 dramatically enhances enzymatic activity and promotes adipogenic differentiation.

It localises to the cytoplasm. Its subcellular location is the cytosol. It carries out the reaction (S)-malate + NAD(+) = oxaloacetate + NADH + H(+). The catalysed reaction is (2R)-2-hydroxy-3-(4-hydroxyphenyl)propanoate + NAD(+) = 3-(4-hydroxyphenyl)pyruvate + NADH + H(+). It catalyses the reaction (S)-2-hydroxyglutarate + NAD(+) = 2-oxoglutarate + NADH + H(+). Its function is as follows. Catalyzes the reduction of aromatic alpha-keto acids in the presence of NADH. Plays essential roles in the malate-aspartate shuttle and the tricarboxylic acid cycle, important in mitochondrial NADH supply for oxidative phosphorylation. Catalyzes the reduction of 2-oxoglutarate to 2-hydroxyglutarate, leading to elevated reactive oxygen species (ROS). This Homo sapiens (Human) protein is Malate dehydrogenase, cytoplasmic.